A 408-amino-acid polypeptide reads, in one-letter code: GTPase Obg (408 aa).

The 159-residue stretch at 1–159 (MKFVDEVSIR…RDLKMEMKVL (159 aa)) folds into the Obg domain. Residues 127–148 (NTRFKSSTNRAPRQTTPGKPGE) form a disordered region. The span at 129–143 (RFKSSTNRAPRQTTP) shows a compositional bias: polar residues. Positions 160–333 (ADVGLLGLPN…LSHDLMRYLE (174 aa)) constitute an OBG-type G domain. GTP contacts are provided by residues 166-173 (GLPNAGKS), 191-195 (FTTLV), 213-216 (DIPG), 283-286 (NKAD), and 314-316 (SAI). The Mg(2+) site is built by Ser-173 and Thr-193. Positions 385–401 (GDDDGWDDDFEDDEDGP) are enriched in acidic residues. The tract at residues 385–408 (GDDDGWDDDFEDDEDGPEIIYVRD) is disordered.

This sequence belongs to the TRAFAC class OBG-HflX-like GTPase superfamily. OBG GTPase family. Monomer. Requires Mg(2+) as cofactor.

The protein resides in the cytoplasm. In terms of biological role, an essential GTPase which binds GTP, GDP and possibly (p)ppGpp with moderate affinity, with high nucleotide exchange rates and a fairly low GTP hydrolysis rate. Plays a role in control of the cell cycle, stress response, ribosome biogenesis and in those bacteria that undergo differentiation, in morphogenesis control. This is GTPase Obg from Pseudomonas putida (strain ATCC 700007 / DSM 6899 / JCM 31910 / BCRC 17059 / LMG 24140 / F1).